We begin with the raw amino-acid sequence, 130 residues long: Ribonuclease VapC22 (130 aa).

A PINc domain is found at 4-119 (VLLDSHVAYW…RLVTKDRRLR (116 aa)). Aspartate 7 and aspartate 97 together coordinate Mg(2+).

It belongs to the PINc/VapC protein family. Requires Mg(2+) as cofactor.

It localises to the secreted. Toxic component of a type II toxin-antitoxin (TA) system. An RNase. Upon expression in M.smegmatis inhibits translation and colony formation. Its toxic effect on colony formation is neutralized by coexpression with cognate antitoxin VapB22; the effect on translation has not been tested but is probably neutralized also. The chain is Ribonuclease VapC22 from Mycobacterium tuberculosis (strain ATCC 25618 / H37Rv).